We begin with the raw amino-acid sequence, 233 residues long: Histidinol dehydrogenase (233 aa).

Positions 31, 53, and 56 each coordinate substrate. Zn(2+)-binding residues include glutamine 53 and histidine 56. Active-site proton acceptor residues include glutamate 121 and histidine 122. Substrate is bound by residues histidine 122, aspartate 155, glutamate 209, and histidine 214. Aspartate 155 contacts Zn(2+). Position 214 (histidine 214) interacts with Zn(2+).

This sequence belongs to the histidinol dehydrogenase family. Zn(2+) is required as a cofactor.

The enzyme catalyses L-histidinol + 2 NAD(+) + H2O = L-histidine + 2 NADH + 3 H(+). Its pathway is amino-acid biosynthesis; L-histidine biosynthesis; L-histidine from 5-phospho-alpha-D-ribose 1-diphosphate: step 9/9. Functionally, catalyzes the sequential NAD-dependent oxidations of L-histidinol to L-histidinaldehyde and then to L-histidine. The protein is Histidinol dehydrogenase (hisD) of Thiocapsa roseopersicina.